An 89-amino-acid polypeptide reads, in one-letter code: Small ribosomal subunit protein uS15 (89 aa).

Belongs to the universal ribosomal protein uS15 family. Part of the 30S ribosomal subunit. Forms a bridge to the 50S subunit in the 70S ribosome, contacting the 23S rRNA.

One of the primary rRNA binding proteins, it binds directly to 16S rRNA where it helps nucleate assembly of the platform of the 30S subunit by binding and bridging several RNA helices of the 16S rRNA. In terms of biological role, forms an intersubunit bridge (bridge B4) with the 23S rRNA of the 50S subunit in the ribosome. The polypeptide is Small ribosomal subunit protein uS15 (Bartonella quintana (strain Toulouse) (Rochalimaea quintana)).